Reading from the N-terminus, the 525-residue chain is G-protein regulator 2 (525 aa).

The GoLoco domain occupies 424–445 (PVDMMDLIFSMSSRMDDQRTEL). The disordered stretch occupies residues 489–525 (TMNRILKRSKKSKSSLDSTNSIQGDDTRSDDVTMTSK).

Interacts with gpr-1; gpr-1 forms a complex with lin-5 and GDP-bound goa-1.

Its subcellular location is the cytoplasm. It is found in the cell cortex. The protein localises to the cytoskeleton. The protein resides in the spindle. In terms of biological role, in the 1-cell embryo, probably together with gpr-1, controls nuclear rotation and spindle elongation during mitosis. Complex of gpr-1 and gpr-2, in association with lin-5, activates G-protein signaling to affect mitotic spindle force. Polarity determinants (par genes) may regulate lin-5/gpr-1/gpr-2/goa-1 locally to create the asymmetric forces that drive spindle movement. This Caenorhabditis elegans protein is G-protein regulator 2 (gpr-2).